The chain runs to 208 residues: Probable acyl-homoserine-lactone synthase (208 aa).

It belongs to the autoinducer synthase family.

It catalyses the reaction a fatty acyl-[ACP] + S-adenosyl-L-methionine = an N-acyl-L-homoserine lactone + S-methyl-5'-thioadenosine + holo-[ACP] + H(+). Its function is as follows. Required for the synthesis of OHHL (N-(3-oxooctanoyl)-L-homoserine lactone), an autoinducer molecule which binds to TraR and thus acts in the control of conjugal transfer. This is Probable acyl-homoserine-lactone synthase (traI) from Sinorhizobium fredii (strain NBRC 101917 / NGR234).